A 172-amino-acid chain; its full sequence is Pollen-specific protein-like At4g18596 (172 aa).

Positions 1-27 are cleaved as a signal peptide; sequence MASKAIFFFFVSAVCLSSLAGVAIADA. 3 cysteine pairs are disulfide-bonded: Cys-41-Cys-112, Cys-44-Cys-157, and Cys-65-Cys-100. A glycan (N-linked (GlcNAc...) asparagine) is linked at Asn-70.

This sequence belongs to the Ole e I family.

It localises to the secreted. The protein is Pollen-specific protein-like At4g18596 of Arabidopsis thaliana (Mouse-ear cress).